Consider the following 83-residue polypeptide: NADH dehydrogenase [ubiquinone] iron-sulfur protein 5-B (83 aa).

One can recognise a CHCH domain in the interval 11 to 52 (KGRCYDFWMDFSECMSHCREPKDCTLLREDYLECLHHSKEFQ). 2 short sequence motifs (cx9C motif) span residues 14–24 (CYDFWMDFSEC) and 34–44 (CTLLREDYLEC). Disulfide bonds link Cys14-Cys44 and Cys24-Cys34. The segment at 62–83 (QRKLRAASRKGEETGDGTHTHH) is disordered.

It belongs to the complex I NDUFS5 subunit family. As to quaternary structure, complex I is composed of at least 49 different subunits. This is a component of the iron-sulfur (IP) fragment of the enzyme.

The protein localises to the mitochondrion. Its subcellular location is the mitochondrion inner membrane. It is found in the mitochondrion intermembrane space. Its function is as follows. Accessory subunit of the mitochondrial membrane respiratory chain NADH dehydrogenase (Complex I), that is believed not to be involved in catalysis. Complex I functions in the transfer of electrons from NADH to the respiratory chain. The immediate electron acceptor for the enzyme is believed to be ubiquinone. This is NADH dehydrogenase [ubiquinone] iron-sulfur protein 5-B from Arabidopsis thaliana (Mouse-ear cress).